The chain runs to 163 residues: MASEHSFDISGEIDKQELKNALEQAKKELDSRYDLKGIKSEIELNEKESVYKLICSSEAKLEVLKDIVISKLIKRGINPAGIKELNRESGANFRLNLKVNDAIDTDSAKKINKAIKDSKLKVTSSIRGNEIRVVGKQIDDLQSVMKIVKELNLELNLSFKNLK.

It belongs to the YajQ family.

Its function is as follows. Nucleotide-binding protein. The chain is Nucleotide-binding protein Cla_1551 from Campylobacter lari (strain RM2100 / D67 / ATCC BAA-1060).